Here is a 101-residue protein sequence, read N- to C-terminus: Protein Tat (101 aa).

Basic and acidic residues predominate over residues 1–12; the sequence is MEPVDPRLEPWK. The disordered stretch occupies residues 1 to 24; that stretch reads MEPVDPRLEPWKHPGSQPKTASNN. The segment at 1–24 is interaction with human CREBBP; that stretch reads MEPVDPRLEPWKHPGSQPKTASNN. Residues 1–48 are transactivation; it reads MEPVDPRLEPWKHPGSQPKTASNNCYCKRCCLHCQVCFTKKGLGISYG. A cysteine-rich region spans residues 22 to 37; that stretch reads SNNCYCKRCCLHCQVC. Positions 25 and 27 each coordinate Zn(2+). Lysine 28 is modified (N6-acetyllysine; by host PCAF). 4 residues coordinate Zn(2+): cysteine 30, histidine 33, cysteine 34, and cysteine 37. Residues 38–48 are core; that stretch reads FTKKGLGISYG. Residues 45 to 101 are disordered; sequence ISYGRKKRRQRRRAPQDSKTHQVSLSKQPASQPRGDPTGPKESKKKVERETETDPED. Over residues 48–57 the composition is skewed to basic residues; sequence GRKKRRQRRR. The Nuclear localization signal, RNA-binding (TAR), and protein transduction motif lies at 49–57; that stretch reads RKKRRQRRR. The segment at 49 to 86 is interaction with the host capping enzyme RNGTT; it reads RKKRRQRRRAPQDSKTHQVSLSKQPASQPRGDPTGPKE. N6-acetyllysine; by host EP300 and GCN5L2 is present on residues lysine 50 and lysine 51. An asymmetric dimethylarginine; by host PRMT6 mark is found at arginine 52 and arginine 53. Positions 65–75 are enriched in polar residues; it reads HQVSLSKQPAS. Residue lysine 71 forms a Glycyl lysine isopeptide (Lys-Gly) (interchain with G-Cter in ubiquitin) linkage. The short motif at 78–80 is the Cell attachment site element; the sequence is RGD. The segment covering 83 to 101 has biased composition (basic and acidic residues); that stretch reads GPKESKKKVERETETDPED.

This sequence belongs to the lentiviruses Tat family. In terms of assembly, interacts with host CCNT1. Associates with the P-TEFb complex composed at least of Tat, P-TEFb (CDK9 and CCNT1), TAR RNA, RNA Pol II. Recruits the HATs CREBBP, TAF1/TFIID, EP300, PCAF and GCN5L2. Interacts with host KAT5/Tip60; this interaction targets the latter to degradation. Interacts with the host deacetylase SIRT1. Interacts with host capping enzyme RNGTT; this interaction stimulates RNGTT. Binds to host KDR, and to the host integrins ITGAV/ITGB3 and ITGA5/ITGB1. Interacts with host KPNB1/importin beta-1 without previous binding to KPNA1/importin alpha-1. Interacts with EIF2AK2. Interacts with host nucleosome assembly protein NAP1L1; this interaction may be required for the transport of Tat within the nucleus, since the two proteins interact at the nuclear rim. Interacts with host C1QBP/SF2P32; this interaction involves lysine-acetylated Tat. Interacts with the host chemokine receptors CCR2, CCR3 and CXCR4. Interacts with host DPP4/CD26; this interaction may trigger an anti-proliferative effect. Interacts with host LDLR. Interacts with the host extracellular matrix metalloproteinase MMP1. Interacts with host PRMT6; this interaction mediates Tat's methylation. Interacts with, and is ubiquitinated by MDM2/Hdm2. Interacts with host PSMC3 and HTATIP2. Interacts with STAB1; this interaction may overcome SATB1-mediated repression of IL2 and IL2RA (interleukin) in T cells by binding to the same domain than HDAC1. Interacts (when acetylated) with human CDK13, thereby increasing HIV-1 mRNA splicing and promoting the production of the doubly spliced HIV-1 protein Nef. Interacts with host TBP; this interaction modulates the activity of transcriptional pre-initiation complex. Interacts with host RELA. Interacts with host PLSCR1; this interaction negatively regulates Tat transactivation activity by altering its subcellular distribution. Asymmetrical arginine methylation by host PRMT6 seems to diminish the transactivation capacity of Tat and affects the interaction with host CCNT1. Post-translationally, acetylation by EP300, CREBBP, GCN5L2/GCN5 and PCAF regulates the transactivation activity of Tat. EP300-mediated acetylation of Lys-50 promotes dissociation of Tat from the TAR RNA through the competitive binding to PCAF's bromodomain. In addition, the non-acetylated Tat's N-terminus can also interact with PCAF. PCAF-mediated acetylation of Lys-28 enhances Tat's binding to CCNT1. Lys-50 is deacetylated by SIRT1. In terms of processing, polyubiquitination by host MDM2 does not target Tat to degradation, but activates its transactivation function and fosters interaction with CCNT1 and TAR RNA. Phosphorylated by EIF2AK2 on serine and threonine residues adjacent to the basic region important for TAR RNA binding and function. Phosphorylation of Tat by EIF2AK2 is dependent on the prior activation of EIF2AK2 by dsRNA.

The protein resides in the host nucleus. Its subcellular location is the host nucleolus. It localises to the host cytoplasm. It is found in the secreted. Functionally, transcriptional activator that increases RNA Pol II processivity, thereby increasing the level of full-length viral transcripts. Recognizes a hairpin structure at the 5'-LTR of the nascent viral mRNAs referred to as the transactivation responsive RNA element (TAR) and recruits the cyclin T1-CDK9 complex (P-TEFb complex) that will in turn hyperphosphorylate the RNA polymerase II to allow efficient elongation. The CDK9 component of P-TEFb and other Tat-activated kinases hyperphosphorylate the C-terminus of RNA Pol II that becomes stabilized and much more processive. Other factors such as HTATSF1/Tat-SF1, SUPT5H/SPT5, and HTATIP2 are also important for Tat's function. Besides its effect on RNA Pol II processivity, Tat induces chromatin remodeling of proviral genes by recruiting the histone acetyltransferases (HATs) CREBBP, EP300 and PCAF to the chromatin. This also contributes to the increase in proviral transcription rate, especially when the provirus integrates in transcriptionally silent region of the host genome. To ensure maximal activation of the LTR, Tat mediates nuclear translocation of NF-kappa-B by interacting with host RELA. Through its interaction with host TBP, Tat may also modulate transcription initiation. Tat can reactivate a latently infected cell by penetrating in it and transactivating its LTR promoter. In the cytoplasm, Tat is thought to act as a translational activator of HIV-1 mRNAs. Extracellular circulating Tat can be endocytosed by surrounding uninfected cells via the binding to several surface receptors such as CD26, CXCR4, heparan sulfate proteoglycans (HSPG) or LDLR. Neurons are rarely infected, but they internalize Tat via their LDLR. Through its interaction with nuclear HATs, Tat is potentially able to control the acetylation-dependent cellular gene expression. Modulates the expression of many cellular genes involved in cell survival, proliferation or in coding for cytokines or cytokine receptors. Tat plays a role in T-cell and neurons apoptosis. Tat induced neurotoxicity and apoptosis probably contribute to neuroAIDS. Circulating Tat also acts as a chemokine-like and/or growth factor-like molecule that binds to specific receptors on the surface of the cells, affecting many cellular pathways. In the vascular system, Tat binds to ITGAV/ITGB3 and ITGA5/ITGB1 integrins dimers at the surface of endothelial cells and competes with bFGF for heparin-binding sites, leading to an excess of soluble bFGF. This chain is Protein Tat, found in Homo sapiens (Human).